Here is a 247-residue protein sequence, read N- to C-terminus: NAD-dependent protein deacetylase (247 aa).

The region spanning 1 to 244 is the Deacetylase sirtuin-type domain; it reads MIYEKVAEEL…PKILENVRQK (244 aa). 8 residues coordinate NAD(+): Ala22, Thr26, Phe33, Arg34, Gln98, Ile100, Asp101, and His116. Phe33 is a binding site for nicotinamide. Nicotinamide-binding residues include Ile100 and Asp101. Residue His116 is the Proton acceptor of the active site. Residues Cys124, Cys127, Cys149, and Cys151 each coordinate Zn(2+). 4 residues coordinate NAD(+): Ser187, Ser188, Asn212, and Val230.

Belongs to the sirtuin family. Class U subfamily. In terms of assembly, monomer. Requires Zn(2+) as cofactor.

Its subcellular location is the cytoplasm. It catalyses the reaction N(6)-acetyl-L-lysyl-[protein] + NAD(+) + H2O = 2''-O-acetyl-ADP-D-ribose + nicotinamide + L-lysyl-[protein]. Its function is as follows. NAD-dependent protein deacetylase which modulates the activities of several enzymes which are inactive in their acetylated form. Deacetylates the N-terminal lysine residue of albA1, the major archaeal DNA compaction protein and that, in turn, increases albA1's DNA binding affinity, thereby repressing transcription. The polypeptide is NAD-dependent protein deacetylase (Saccharolobus solfataricus (strain ATCC 35092 / DSM 1617 / JCM 11322 / P2) (Sulfolobus solfataricus)).